The following is a 116-amino-acid chain: Ferredoxin-like protein in nif region (116 aa).

The region spanning 2 to 29 (AYTITSQCISCKLCSSVCPTGAIKIAEN) is the 4Fe-4S ferredoxin-type domain. Positions 9, 12, 15, and 19 each coordinate iron-sulfur cluster.

The protein is Ferredoxin-like protein in nif region (fdxN) of Nostoc sp. (strain PCC 7120 / SAG 25.82 / UTEX 2576).